Here is a 150-residue protein sequence, read N- to C-terminus: UPF0756 membrane protein PMI1560 (150 aa).

4 helical membrane-spanning segments follow: residues 16 to 36 (GLGI…LLVI), 51 to 71 (YGMT…IATG), 82 to 102 (FLNW…WLGA), and 123 to 143 (VIGV…AGIL).

The protein belongs to the UPF0756 family.

It is found in the cell membrane. The sequence is that of UPF0756 membrane protein PMI1560 from Proteus mirabilis (strain HI4320).